We begin with the raw amino-acid sequence, 37 residues long: Large ribosomal subunit protein bL36c (37 aa).

It belongs to the bacterial ribosomal protein bL36 family.

Its subcellular location is the plastid. It localises to the chloroplast. The protein is Large ribosomal subunit protein bL36c (rpl36) of Marchantia polymorpha (Common liverwort).